The chain runs to 435 residues: Probable aminotransferase gliI (435 aa).

N6-(pyridoxal phosphate)lysine is present on Lys-266.

This sequence belongs to the class-I pyridoxal-phosphate-dependent aminotransferase family. It depends on pyridoxal 5'-phosphate as a cofactor.

The protein operates within mycotoxin biosynthesis. Its function is as follows. Probable aminotransferase; part of the gene cluster that mediates the biosynthesis of gliotoxin, a member of the epipolythiodioxopiperazine (ETP) class of toxins characterized by a disulfide bridged cyclic dipeptide. The first step in gliotoxin biosynthesis is the condensation of serine and phenylalanine to form the cyclo-L-phenylalanyl-L-serine diketopiperazine (DKP) by the NRPS gliP. GliP is also able to produce the DKP cyclo-L-tryptophanyl-L-serine, suggesting that the substrate specificity of the first adenylation (A) domain in gliP is sufficiently relaxed to accommodate both L-Phe and L-Trp. The cytochrome P450 monooxygenase gliC has been shown to catalyze the subsequent hydroxylation of the alpha-carbon of L-Phe in cyclo-L-phenylalanyl-L-serine whereas the second cytochrome P450 enzyme, gliF, is presumably involved in the modification of the DKP side chain. The glutathione S-transferase (GST) gliG then forms a bis-glutathionylated biosynthetic intermediate which is responsible for the sulfurization of gliotoxin. This bis-glutathionylated intermediate is subsequently processed by the gamma-glutamyl cyclotransferase gliK to remove both gamma-glutamyl moieties. Subsequent processing via gliI yields a biosynthetic intermediate, which is N-methylated via the N-methyltransferase gliN, before the gliotoxin oxidoreductase gliT-mediated disulfide bridge closure. GliN-mediated amide methylation confers stability to ETP, damping the spontaneous formation of tri- and tetrasulfides. Intracellular dithiol gliotoxin oxidized by gliT is subsequently effluxed by gliA. Gliotoxin contributes to pathogenesis during invasive aspergillosis. In macrophages and neutrophils, gliotoxin showed inhibition of various different cell functions including cytokine production, antigen presentation, phagocytosis, and production of reactive oxygen species. The protein is Probable aminotransferase gliI of Aspergillus fumigatus (strain ATCC MYA-4609 / CBS 101355 / FGSC A1100 / Af293) (Neosartorya fumigata).